The following is a 211-amino-acid chain: MVRDKWKDKVWYTILAPDMFDNVEVGETPADDPEKVIGRVLETTLGDVLDDITKHHIKVFFRIYDVEGTTAYSKFEGHRLMRDYVRSLVRRGTSRIDGVIDVVTKDGYKVRVAGLAFTTRRAKTSQQRAIRKEMFKVIEENAKECDFDEFIRRCLSISEEESIPEQIKEAGRKIYPIRQAEIRKTEVLEEPNGLPPYEAVGDRATPELASY.

Residues 192-211 are disordered; the sequence is NGLPPYEAVGDRATPELASY.

Belongs to the eukaryotic ribosomal protein eS1 family.

The protein is Small ribosomal subunit protein eS1 of Methanopyrus kandleri (strain AV19 / DSM 6324 / JCM 9639 / NBRC 100938).